A 208-amino-acid chain; its full sequence is Putative vomeronasal receptor-like protein 4 (208 aa).

The Extracellular segment spans residues 1 to 19; that stretch reads MEMTKLFSYIVIKNVYYPQ. Residues 20-40 form a helical membrane-spanning segment; the sequence is VSFGISANTFLLLFHIFTFAY. Residues 41-48 are Cytoplasmic-facing; the sequence is THRLKPID. A helical transmembrane segment spans residues 49-69; that stretch reads MTISHLPLIHILLLFTQAILV. The Extracellular segment spans residues 70-97; the sequence is SSDLFESWNIQNNDLKCKIITFLNRVMR. A disulfide bridge connects residues C86 and C173. A helical transmembrane segment spans residues 98-118; that stretch reads GVSICTTCLLSVLQAITISPS. Residues 119-135 lie on the Cytoplasmic side of the membrane; it reads TSFLEKFKHISANHTLG. A helical transmembrane segment spans residues 136-156; sequence FILFSWVLNMFITNNLLLFIV. At 157–183 the chain is on the extracellular side; the sequence is PTPNRIGASLLFVTEHCYVLPMSYTHR. Residues 184 to 204 traverse the membrane as a helical segment; the sequence is SLFFILMVLRDVIFIGLMVLS. Topologically, residues 205–208 are cytoplasmic; that stretch reads SGYG.

Belongs to the G-protein coupled receptor 1 family. Expressed in olfactory nerve.

Its subcellular location is the cell membrane. Its function is as follows. Putative pheromone receptor. This Homo sapiens (Human) protein is Putative vomeronasal receptor-like protein 4 (VN1R17P).